The sequence spans 448 residues: Chromosomal replication initiator protein DnaA (448 aa).

Residues M1–K73 form a domain I, interacts with DnaA modulators region. The tract at residues K73–S109 is domain II. A domain III, AAA+ region region spans residues I110 to S326. ATP is bound by residues G154, G156, K157, and T158. A domain IV, binds dsDNA region spans residues S327–N448.

This sequence belongs to the DnaA family. As to quaternary structure, oligomerizes as a right-handed, spiral filament on DNA at oriC.

It localises to the cytoplasm. Plays an essential role in the initiation and regulation of chromosomal replication. ATP-DnaA binds to the origin of replication (oriC) to initiate formation of the DNA replication initiation complex once per cell cycle. Binds the DnaA box (a 9 base pair repeat at the origin) and separates the double-stranded (ds)DNA. Forms a right-handed helical filament on oriC DNA; dsDNA binds to the exterior of the filament while single-stranded (ss)DNA is stabiized in the filament's interior. The ATP-DnaA-oriC complex binds and stabilizes one strand of the AT-rich DNA unwinding element (DUE), permitting loading of DNA polymerase. After initiation quickly degrades to an ADP-DnaA complex that is not apt for DNA replication. Binds acidic phospholipids. The sequence is that of Chromosomal replication initiator protein DnaA from Clostridium novyi (strain NT).